The following is a 365-amino-acid chain: Endophilin-B1 (365 aa).

Met1 carries the post-translational modification N-acetylmethionine. The tract at residues 1-30 is membrane-binding amphipathic helix; it reads MNIMDFNVKKLAADAGTFLSRAVQFTEEKL. Positions 1–37 are required for membrane binding; it reads MNIMDFNVKKLAADAGTFLSRAVQFTEEKLGQAEKTE. The region spanning 27-261 is the BAR domain; it reads EEKLGQAEKT…LGSFPSNYLS (235 aa). The residue at position 145 (Thr145) is a Phosphothreonine; by CDK5. Residues 155 to 195 are a coiled coil; the sequence is YKTIAKERKLLQNKRLDLDAAKTRLKKAKAAETRNSSEQEL. Positions 305–365 constitute an SH3 domain; it reads SGSRKARVLY…VPITYLELLN (61 aa).

The protein belongs to the endophilin family. Homodimer, and heterodimer with SH3GLB2. Binds BAX; induction of apoptosis augments BAX binding. Binds DNM1, HTT, AMPH, BIN1 and ARFGAP1. Interacts with UVRAG; UVRAG bridges the interaction to BECN1 indicative for an association with the PI3K complex II (PI3KC3-C2). In terms of processing, phosphorylated at Thr-145 by CDK5; this phosphorylation is required for autophagy induction in starved neurons and facilitates homodimerization. As to expression, highly expressed in heart, skeletal muscle, kidney and placenta. Detected at lower levels in brain, colon, thymus, spleen, liver, small intestine, lung and peripheral blood leukocytes.

Its subcellular location is the cytoplasm. The protein localises to the golgi apparatus membrane. It localises to the mitochondrion outer membrane. It is found in the cytoplasmic vesicle. The protein resides in the autophagosome membrane. Its subcellular location is the midbody. Functionally, may be required for normal outer mitochondrial membrane dynamics. Required for coatomer-mediated retrograde transport in certain cells. May recruit other proteins to membranes with high curvature. May promote membrane fusion. Involved in activation of caspase-dependent apoptosis by promoting BAX/BAK1 activation. Isoform 1 acts proapoptotic in fibroblasts. Involved in caspase-independent apoptosis during nutrition starvation and involved in the regulation of autophagy. Activates lipid kinase activity of PIK3C3 during autophagy probably by associating with the PI3K complex II (PI3KC3-C2). Associated with PI3KC3-C2 during autophagy may regulate the trafficking of ATG9A from the Golgi complex to the peripheral cytoplasm for the formation of autophagosomes by inducing Golgi membrane tubulation and fragmentation. Involved in regulation of degradative endocytic trafficking and cytokinesis, probably in the context of PI3KC3-C2. Isoform 2 acts antiapoptotic in neuronal cells; involved in maintenance of mitochondrial morphology and promotes neuronal viability. This chain is Endophilin-B1 (SH3GLB1), found in Homo sapiens (Human).